The primary structure comprises 274 residues: 4-diphosphocytidyl-2-C-methyl-D-erythritol kinase (274 aa).

Lysine 9 is an active-site residue. Position 91-101 (91-101) interacts with ATP; sequence PAGAGLGGGSS. Aspartate 133 is an active-site residue.

It belongs to the GHMP kinase family. IspE subfamily.

The catalysed reaction is 4-CDP-2-C-methyl-D-erythritol + ATP = 4-CDP-2-C-methyl-D-erythritol 2-phosphate + ADP + H(+). The protein operates within isoprenoid biosynthesis; isopentenyl diphosphate biosynthesis via DXP pathway; isopentenyl diphosphate from 1-deoxy-D-xylulose 5-phosphate: step 3/6. In terms of biological role, catalyzes the phosphorylation of the position 2 hydroxy group of 4-diphosphocytidyl-2C-methyl-D-erythritol. This is 4-diphosphocytidyl-2-C-methyl-D-erythritol kinase from Persephonella marina (strain DSM 14350 / EX-H1).